We begin with the raw amino-acid sequence, 323 residues long: MNPNFLEFEQPIADLEAKIEELRLVGSGSDINISEEVAKLQEKSITLTESIFRGLSSWQISQLSRHPKRPYMLDYIKRIFTDFDELHGDRAFSDDPAIIGGMTRLNGQPVMVIGHQKGREVKEKVRRNFGMPKPEGYRKALRLMEMAERFKLPVLTFIDTPGAFPGIDAEERGQSEAIARNLRVMSQLKTPILATVIGEGGSGGALAIGVCDHLQMLEFSTYSVISPEGCASILWRSADKAPEAAQAMGLTAGRLHELGIVDQVIKEPLGGAHRDYDQAADAIRKALAAQLESLCSMETDALINRRYERLMSYGNVVSDPADE.

The region spanning 32 to 293 (NISEEVAKLQ…RKALAAQLES (262 aa)) is the CoA carboxyltransferase C-terminal domain.

The protein belongs to the AccA family. Acetyl-CoA carboxylase is a heterohexamer composed of biotin carboxyl carrier protein (AccB), biotin carboxylase (AccC) and two subunits each of ACCase subunit alpha (AccA) and ACCase subunit beta (AccD).

The protein resides in the cytoplasm. The catalysed reaction is N(6)-carboxybiotinyl-L-lysyl-[protein] + acetyl-CoA = N(6)-biotinyl-L-lysyl-[protein] + malonyl-CoA. It participates in lipid metabolism; malonyl-CoA biosynthesis; malonyl-CoA from acetyl-CoA: step 1/1. Its function is as follows. Component of the acetyl coenzyme A carboxylase (ACC) complex. First, biotin carboxylase catalyzes the carboxylation of biotin on its carrier protein (BCCP) and then the CO(2) group is transferred by the carboxyltransferase to acetyl-CoA to form malonyl-CoA. The protein is Acetyl-coenzyme A carboxylase carboxyl transferase subunit alpha of Alcanivorax borkumensis (strain ATCC 700651 / DSM 11573 / NCIMB 13689 / SK2).